A 63-amino-acid chain; its full sequence is Putative alpha-neurotoxin RjAa9 (63 aa).

The LCN-type CS-alpha/beta domain occupies 1 to 60; that stretch reads KEGYPVDWGNCKYECMSDEYCKDLCADRKATSGYCYKLNWSCYCKGLPDDSPIKTPGKCR. Intrachain disulfides connect cysteine 11–cysteine 59, cysteine 15–cysteine 35, cysteine 21–cysteine 42, and cysteine 25–cysteine 44.

Belongs to the long (4 C-C) scorpion toxin superfamily. Sodium channel inhibitor family. Alpha subfamily. In terms of tissue distribution, expressed by the venom gland.

The protein resides in the secreted. Its function is as follows. Alpha toxins bind voltage-independently at site-3 of sodium channels (Nav) and inhibits the inactivation of the activated channels, thereby blocking neuronal transmission. This Rhopalurus junceus (Caribbean blue scorpion) protein is Putative alpha-neurotoxin RjAa9.